The primary structure comprises 418 residues: Serine hydroxymethyltransferase (418 aa).

(6S)-5,6,7,8-tetrahydrofolate-binding positions include Leu117 and 121 to 123; that span reads GHL. Lys225 is subject to N6-(pyridoxal phosphate)lysine.

This sequence belongs to the SHMT family. Homodimer. The cofactor is pyridoxal 5'-phosphate.

The protein localises to the cytoplasm. It carries out the reaction (6R)-5,10-methylene-5,6,7,8-tetrahydrofolate + glycine + H2O = (6S)-5,6,7,8-tetrahydrofolate + L-serine. It functions in the pathway one-carbon metabolism; tetrahydrofolate interconversion. The protein operates within amino-acid biosynthesis; glycine biosynthesis; glycine from L-serine: step 1/1. Its function is as follows. Catalyzes the reversible interconversion of serine and glycine with tetrahydrofolate (THF) serving as the one-carbon carrier. This reaction serves as the major source of one-carbon groups required for the biosynthesis of purines, thymidylate, methionine, and other important biomolecules. Also exhibits THF-independent aldolase activity toward beta-hydroxyamino acids, producing glycine and aldehydes, via a retro-aldol mechanism. The chain is Serine hydroxymethyltransferase from Mycoplasma mobile (strain ATCC 43663 / 163K / NCTC 11711) (Mesomycoplasma mobile).